Consider the following 47-residue polypeptide: MSNPKRSPNHFAPNHIGTQPRAAGGNKGKQMQDQSGQHAQVIQTKGE.

Positions 1–47 are disordered; the sequence is MSNPKRSPNHFAPNHIGTQPRAAGGNKGKQMQDQSGQHAQVIQTKGE. Residues 29–47 show a composition bias toward polar residues; that stretch reads KQMQDQSGQHAQVIQTKGE.

Belongs to the SspN family.

It is found in the spore core. The chain is Small, acid-soluble spore protein N from Geobacillus thermodenitrificans (strain NG80-2).